The following is a 200-amino-acid chain: Protein GrpE (200 aa).

Residues 1 to 12 (MSNEEIKNKDEQ) show a composition bias toward basic and acidic residues. Residues 1–30 (MSNEEIKNKDEQLQQDAVETEAEVVGTDAD) are disordered.

It belongs to the GrpE family. As to quaternary structure, homodimer.

The protein resides in the cytoplasm. Its function is as follows. Participates actively in the response to hyperosmotic and heat shock by preventing the aggregation of stress-denatured proteins, in association with DnaK and GrpE. It is the nucleotide exchange factor for DnaK and may function as a thermosensor. Unfolded proteins bind initially to DnaJ; upon interaction with the DnaJ-bound protein, DnaK hydrolyzes its bound ATP, resulting in the formation of a stable complex. GrpE releases ADP from DnaK; ATP binding to DnaK triggers the release of the substrate protein, thus completing the reaction cycle. Several rounds of ATP-dependent interactions between DnaJ, DnaK and GrpE are required for fully efficient folding. The chain is Protein GrpE from Vibrio cholerae serotype O1 (strain ATCC 39315 / El Tor Inaba N16961).